Here is a 160-residue protein sequence, read N- to C-terminus: Transcription elongation factor GreA (160 aa).

A coiled-coil region spans residues 10-37; it reads TLDGKAKLENELQELKTVKRKEVVERIK.

It belongs to the GreA/GreB family.

Necessary for efficient RNA polymerase transcription elongation past template-encoded arresting sites. The arresting sites in DNA have the property of trapping a certain fraction of elongating RNA polymerases that pass through, resulting in locked ternary complexes. Cleavage of the nascent transcript by cleavage factors such as GreA or GreB allows the resumption of elongation from the new 3'terminus. GreA releases sequences of 2 to 3 nucleotides. This chain is Transcription elongation factor GreA, found in Listeria innocua serovar 6a (strain ATCC BAA-680 / CLIP 11262).